A 60-amino-acid chain; its full sequence is Large ribosomal subunit protein uL30 (60 aa).

It belongs to the universal ribosomal protein uL30 family. As to quaternary structure, part of the 50S ribosomal subunit.

This Idiomarina loihiensis (strain ATCC BAA-735 / DSM 15497 / L2-TR) protein is Large ribosomal subunit protein uL30.